Reading from the N-terminus, the 131-residue chain is Small ribosomal subunit protein uS11 (131 aa).

This sequence belongs to the universal ribosomal protein uS11 family. Part of the 30S ribosomal subunit. Interacts with proteins S7 and S18. Binds to IF-3.

Located on the platform of the 30S subunit, it bridges several disparate RNA helices of the 16S rRNA. Forms part of the Shine-Dalgarno cleft in the 70S ribosome. This is Small ribosomal subunit protein uS11 from Helicobacter pylori (strain ATCC 700392 / 26695) (Campylobacter pylori).